Consider the following 183-residue polypeptide: Archaemetzincin (183 aa).

H131 is a Zn(2+) binding site. The active-site Proton acceptor is E132. H135, H141, C142, C147, C166, and C169 together coordinate Zn(2+).

Belongs to the peptidase M54 family. As to quaternary structure, monomer. It depends on Zn(2+) as a cofactor.

In terms of biological role, probable zinc metalloprotease whose natural substrate is unknown. The sequence is that of Archaemetzincin from Saccharolobus islandicus (strain Y.N.15.51 / Yellowstone #2) (Sulfolobus islandicus).